The following is a 164-amino-acid chain: uncharacterized protein (164 aa).

The RDD domain maps to 26-158; it reads YAGFWVRFWA…DYIADTTVVH (133 aa). The next 2 membrane-spanning stretches (helical) occupy residues 35–55 and 66–86; these read AFLLDWLVIWGLNHLLVSPLF and MFTFSAYSVTTLIVYLAYFAL.

It localises to the cell membrane. This is an uncharacterized protein from Bacillus subtilis (strain 168).